A 76-amino-acid polypeptide reads, in one-letter code: Dermaseptin-S7 (76 aa).

The signal sequence occupies residues Met-1 to Cys-22. The propeptide occupies Glu-23 to Arg-45. Residues Glu-25–Arg-45 form a disordered region. The span at Glu-30–Ser-41 shows a compositional bias: acidic residues. Residue Gln-73 is modified to Glutamine amide. A propeptide spanning residues Glu-75–Gln-76 is cleaved from the precursor.

This sequence belongs to the frog skin active peptide (FSAP) family. Dermaseptin subfamily. In terms of tissue distribution, expressed by the skin glands.

Its subcellular location is the secreted. Functionally, antimicrobial peptide. This is Dermaseptin-S7 from Phyllomedusa sauvagei (Sauvage's leaf frog).